We begin with the raw amino-acid sequence, 318 residues long: NADH-ubiquinone oxidoreductase chain 1 (318 aa).

The next 8 helical transmembrane spans lie at 2–22, 71–91, 98–118, 146–166, 171–191, 222–242, 253–273, and 294–314; these read FMVN…FLTL, YIIA…PLPI, INLG…SILW, LAII…STLI, HTWL…STLA, LFFM…ATIF, EFFS…FLWV, and LPLT…LANI.

The protein belongs to the complex I subunit 1 family.

It is found in the mitochondrion inner membrane. The enzyme catalyses a ubiquinone + NADH + 5 H(+)(in) = a ubiquinol + NAD(+) + 4 H(+)(out). Its function is as follows. Core subunit of the mitochondrial membrane respiratory chain NADH dehydrogenase (Complex I) that is believed to belong to the minimal assembly required for catalysis. Complex I functions in the transfer of electrons from NADH to the respiratory chain. The immediate electron acceptor for the enzyme is believed to be ubiquinone. This chain is NADH-ubiquinone oxidoreductase chain 1 (MT-ND1), found in Nycticebus coucang (Slow loris).